The sequence spans 408 residues: Peptidase T (408 aa).

His-79 contributes to the Zn(2+) binding site. Asp-81 is a catalytic residue. Asp-139 lines the Zn(2+) pocket. The active-site Proton acceptor is Glu-173. Positions 174, 196, and 378 each coordinate Zn(2+).

It belongs to the peptidase M20B family. Zn(2+) is required as a cofactor.

Its subcellular location is the cytoplasm. The enzyme catalyses Release of the N-terminal residue from a tripeptide.. Functionally, cleaves the N-terminal amino acid of tripeptides. In Shouchella clausii (strain KSM-K16) (Alkalihalobacillus clausii), this protein is Peptidase T.